A 1045-amino-acid polypeptide reads, in one-letter code: Extracellular serine protease (1045 aa).

A signal peptide spans 1–27 (MILNKKLKLAYCVFLGCYGLSLHSSLA). Residues 49-396 (QWGLEAISAE…WGRVNLRDAI (348 aa)) enclose the Peptidase S8 domain. Catalysis depends on charge relay system residues Asp-76, His-112, and Ser-341. Residues 646 to 1045 (SLASTENDKE…SVNAGLTWRF (400 aa)) constitute a propeptide that is removed on maturation. The Autotransporter domain maps to 769-1045 (IKADDNGAWA…SVNAGLTWRF (277 aa)).

The protein belongs to the peptidase S8 family.

The protein localises to the secreted. In Serratia marcescens, this protein is Extracellular serine protease.